The chain runs to 156 residues: MRIQLIAVGSKMPSWVEQGYQQYVKRFPSDMPLSLTEIPAGKRGKNADIKRILHKEGELTMAAIPKGNRIVTLEVTGKPWDTPMLASNMQKWQMDGRDVSLLIGGPEGLAPECIAASEQKWSLSPLTLPHPLVRIIVAESLYRAWSVNTNHPYHRE.

S-adenosyl-L-methionine is bound by residues leucine 73, glycine 104, and 123-128 (LSPLTL).

It belongs to the RNA methyltransferase RlmH family. In terms of assembly, homodimer.

It is found in the cytoplasm. It catalyses the reaction pseudouridine(1915) in 23S rRNA + S-adenosyl-L-methionine = N(3)-methylpseudouridine(1915) in 23S rRNA + S-adenosyl-L-homocysteine + H(+). Specifically methylates the pseudouridine at position 1915 (m3Psi1915) in 23S rRNA. This chain is Ribosomal RNA large subunit methyltransferase H, found in Pseudoalteromonas atlantica (strain T6c / ATCC BAA-1087).